The sequence spans 436 residues: MNSKNRINNVGEGVDIEIPDTAHQISSDSWFQAAFVLTTSINSAYVLGYSGTVMVPLGWIGGVVGLILATAISLYANTLVAKLHEFGGKRHIRYRDLAGFIYGRKAYCLTWVLQYVNLFMINCGFIILAGSALKAVYVLFRDDHAMKLPHFIAIAGLICAVFAIGIPHLSALGIWLAVSTILSLIYIVVAIVLSVKDGVKAPSRDYEIQGSPLSKLFTITGAAATLVFVFNTGMLPEIQATVKQPVVKNMMKALYFQFTVGVLPMFAVVFIGYWAYGSSTSPYLLNNVNGPLWVKALANISAILQSVISLHIFASPTYEYMDTKFGIKGNPLALKNLLFRIMARGGYIAVSTLLSALLPFLGDFMSLTGAVSTFPLTFILANHMYYKAKNNKLNTLQKLCHWLNVVFFSLMSVAAAIAALRLIALDSKNFHVFADL.

11 helical membrane-spanning segments follow: residues 29-49 (SWFQAAFVLTTSINSAYVLGY), 52-72 (TVMVPLGWIGGVVGLILATAI), 118-138 (LFMINCGFIILAGSALKAVYV), 151-171 (FIAIAGLICAVFAIGIPHLSA), 172-192 (LGIWLAVSTILSLIYIVVAIV), 216-236 (LFTITGAAATLVFVFNTGMLP), 254-274 (LYFQFTVGVLPMFAVVFIGYW), 296-316 (ALANISAILQSVISLHIFASP), 345-365 (GGYIAVSTLLSALLPFLGDFM), 366-386 (SLTGAVSTFPLTFILANHMYY), and 405-425 (VVFFSLMSVAAAIAALRLIAL).

Belongs to the amino acid/polyamine transporter 2 family. Amino acid/auxin permease (AAAP) (TC 2.A.18.3) subfamily. Expressed in epidermal cells of leaves, sepals and petals.

The protein resides in the cell membrane. Its function is as follows. Proline transporter that mediates proline and glycine betaine transport. When expressed in a heterologous system (yeast), imports L-proline, glycine betaine and GABA across the plasma membrane. In Arabidopsis thaliana (Mouse-ear cress), this protein is Proline transporter 3 (PROT3).